The chain runs to 558 residues: Pyrethroid hydrolase Ces2a (558 aa).

An N-terminal signal peptide occupies residues 1–26 (MPLARLPGWLCVVACGLLLLLQHVHG). Cysteine 95 and cysteine 122 form a disulfide bridge. The residue at position 209 (lysine 209) is an N6-succinyllysine. The active-site Acyl-ester intermediate is serine 227. Asparagine 275 carries N-linked (GlcNAc...) asparagine glycosylation. Cysteine 279 and cysteine 290 are disulfide-bonded. N6-succinyllysine is present on lysine 296. Residue glutamate 344 is the Charge relay system of the active site. The N-linked (GlcNAc...) asparagine glycan is linked to asparagine 361. Residue histidine 456 is the Charge relay system of the active site.

The protein belongs to the type-B carboxylesterase/lipase family.

The protein localises to the microsome. The catalysed reaction is (-)-trans-permethrin + H2O = (3-phenoxyphenyl)methanol + (1S,3R)-3-(2,2-dichlorovinyl)-2,2-dimethylcyclopropanecarboxylate + H(+). It carries out the reaction all-trans-retinyl hexadecanoate + H2O = all-trans-retinol + hexadecanoate + H(+). Carboxylesterases that catalyzes the hydrolysis of pyrethroids pesticides. Hydrolyzes permethrin faster than cypermethrin. Hydrolyzes retinyl esters. The protein is Pyrethroid hydrolase Ces2a of Mus musculus (Mouse).